A 240-amino-acid chain; its full sequence is Phosphatidylserine decarboxylase proenzyme (240 aa).

Ser-198 (schiff-base intermediate with substrate; via pyruvic acid) is an active-site residue. Residue Ser-198 is modified to Pyruvic acid (Ser); by autocatalysis.

Belongs to the phosphatidylserine decarboxylase family. PSD-A subfamily. In terms of assembly, heterodimer of a large membrane-associated beta subunit and a small pyruvoyl-containing alpha subunit. It depends on pyruvate as a cofactor. Is synthesized initially as an inactive proenzyme. Formation of the active enzyme involves a self-maturation process in which the active site pyruvoyl group is generated from an internal serine residue via an autocatalytic post-translational modification. Two non-identical subunits are generated from the proenzyme in this reaction, and the pyruvate is formed at the N-terminus of the alpha chain, which is derived from the carboxyl end of the proenzyme. The post-translation cleavage follows an unusual pathway, termed non-hydrolytic serinolysis, in which the side chain hydroxyl group of the serine supplies its oxygen atom to form the C-terminus of the beta chain, while the remainder of the serine residue undergoes an oxidative deamination to produce ammonia and the pyruvoyl prosthetic group on the alpha chain.

The protein resides in the cell membrane. It carries out the reaction a 1,2-diacyl-sn-glycero-3-phospho-L-serine + H(+) = a 1,2-diacyl-sn-glycero-3-phosphoethanolamine + CO2. It participates in phospholipid metabolism; phosphatidylethanolamine biosynthesis; phosphatidylethanolamine from CDP-diacylglycerol: step 2/2. In terms of biological role, catalyzes the formation of phosphatidylethanolamine (PtdEtn) from phosphatidylserine (PtdSer). The protein is Phosphatidylserine decarboxylase proenzyme of Paramagnetospirillum magneticum (strain ATCC 700264 / AMB-1) (Magnetospirillum magneticum).